The following is a 457-amino-acid chain: Glutamate--tRNA ligase 2 (457 aa).

A 'HIGH' region motif is present at residues 8-18; it reads PSPTGYIHIGN. Positions 249-253 match the 'KMSKS' region motif; the sequence is GFSKR. Lys-252 contributes to the ATP binding site.

The protein belongs to the class-I aminoacyl-tRNA synthetase family. Glutamate--tRNA ligase type 1 subfamily. Monomer.

Its subcellular location is the cytoplasm. It catalyses the reaction tRNA(Glu) + L-glutamate + ATP = L-glutamyl-tRNA(Glu) + AMP + diphosphate. Functionally, catalyzes the attachment of glutamate to tRNA(Glu) in a two-step reaction: glutamate is first activated by ATP to form Glu-AMP and then transferred to the acceptor end of tRNA(Glu). The sequence is that of Glutamate--tRNA ligase 2 from Bartonella tribocorum (strain CIP 105476 / IBS 506).